The sequence spans 318 residues: Aspartate carbamoyltransferase catalytic subunit (318 aa).

Arginine 54 and threonine 55 together coordinate carbamoyl phosphate. Lysine 82 contacts L-aspartate. Carbamoyl phosphate contacts are provided by arginine 104, histidine 134, and glutamine 137. The L-aspartate site is built by arginine 174 and arginine 230. 2 residues coordinate carbamoyl phosphate: glycine 271 and proline 272.

Belongs to the aspartate/ornithine carbamoyltransferase superfamily. ATCase family. Heterododecamer (2C3:3R2) of six catalytic PyrB chains organized as two trimers (C3), and six regulatory PyrI chains organized as three dimers (R2).

It carries out the reaction carbamoyl phosphate + L-aspartate = N-carbamoyl-L-aspartate + phosphate + H(+). The protein operates within pyrimidine metabolism; UMP biosynthesis via de novo pathway; (S)-dihydroorotate from bicarbonate: step 2/3. Functionally, catalyzes the condensation of carbamoyl phosphate and aspartate to form carbamoyl aspartate and inorganic phosphate, the committed step in the de novo pyrimidine nucleotide biosynthesis pathway. This Clavibacter sepedonicus (Clavibacter michiganensis subsp. sepedonicus) protein is Aspartate carbamoyltransferase catalytic subunit.